An 86-amino-acid polypeptide reads, in one-letter code: Class II hydrophobin 2 (86 aa).

An N-terminal signal peptide occupies residues 1–15 (MQFFAVALFATSALA). 4 cysteine pairs are disulfide-bonded: Cys18/Cys67, Cys28/Cys58, Cys29/Cys41, and Cys68/Cys79.

The protein belongs to the cerato-ulmin hydrophobin family. As to quaternary structure, homodimer. Homodimers further self-assemble to form highly ordered films at water-air interfaces through intermolecular interactions.

The protein localises to the secreted. Its subcellular location is the spore wall. It localises to the cell wall. Aerial growth, conidiation, and dispersal of filamentous fungi in the environment rely upon a capability of their secreting small amphipathic proteins called hydrophobins (HPBs) with low sequence identity. Class I can self-assemble into an outermost layer of rodlet bundles on aerial cell surfaces, conferring cellular hydrophobicity that supports fungal growth, development and dispersal; whereas Class II form highly ordered films at water-air interfaces through intermolecular interactions but contribute nothing to the rodlet structure. Hbf2 is a class II hydrophobin that is involved in sporuration. The chain is Class II hydrophobin 2 from Hypocrea jecorina (Trichoderma reesei).